We begin with the raw amino-acid sequence, 234 residues long: Large ribosomal subunit protein bL25 (234 aa).

Belongs to the bacterial ribosomal protein bL25 family. CTC subfamily. Part of the 50S ribosomal subunit; part of the 5S rRNA/L5/L18/L25 subcomplex. Contacts the 5S rRNA. Binds to the 5S rRNA independently of L5 and L18.

This is one of the proteins that binds to the 5S RNA in the ribosome where it forms part of the central protuberance. This is Large ribosomal subunit protein bL25 from Rhodopseudomonas palustris (strain BisA53).